A 436-amino-acid chain; its full sequence is MGVRAAPSCAAAPAAAGAEQSRRPGLWPPSPPPPLLLLLLLSLGLLHAGDCQQPTQCRIQKCTTDFVALTAHLNSAADGFDSEFCKALRAYAGCTQRTSKACRGNLVYHSAVLGISDLMSQRNCSKDGPTSSTNPEVTHDPCNYHSHGGVREHGGGDQRPPNYLFCGLFGDPHLRTFKDHFQTCKVEGAWPLIDNNYLSVQVTNVPVVPGSSATATNKVTIIFKAQHECTDQKVYQAVTDDLPAAFVDGTTSGGDGDVKSLHIVEKESGRYVEMHARYIGTTVFVRQLGRYLTLAIRMPEDLAMSYEESQDLQLCVNGCPMSECIDDGQGQVSAILGHSLPHTTSVQAWPGYTLETASTQCHEKMPVKDIYFQSCVFDLLTTGDANFTAAAHSALEDVEALHPRKERWHIFPSSCGGCRDLPVGLGLTCLILIMFL.

A signal peptide spans 1–48; that stretch reads MGVRAAPSCAAAPAAAGAEQSRRPGLWPPSPPPPLLLLLLLSLGLLHA. Asn123 carries N-linked (GlcNAc...) asparagine glycosylation. Disulfide bonds link Cys142–Cys229 and Cys166–Cys315. A glycan (N-linked (GlcNAc...) asparagine) is linked at Asn386. The GPI-anchor amidated cysteine moiety is linked to residue Cys415. Residues 416 to 436 constitute a propeptide, removed in mature form; it reads GGCRDLPVGLGLTCLILIMFL.

It belongs to the repulsive guidance molecule (RGM) family. As to quaternary structure, homooligomer. Interacts with DRGX. Interacts with BMP2 and BMP4. Interacts with the BMP type I receptors ACVR1, BMPR1A and BMPR1B and with the BMP type II receptor ACVR2B. The functional complex with its receptor NEO1/neogenin appears to be a heterotetramer with a 2:2 stoichiometry, RGM molecules acting as staples that bring two NEO1 receptors together without interacting themselves, this arrangement leads to activation of downstream signaling via RhoA. Post-translationally, GPI-anchored. In terms of processing, autocatalytically cleaved at low pH; the two chains remain linked via two disulfide bonds. In terms of tissue distribution, detected in neonatal and adult dorsal root ganglion sensory neurons, spinal cord, and brain (at protein level). Also expressed at high levels in retinal ganglion cells of developing mouse, extending to the optic nerve (at protein level). Expressed in testis, epididymis, ovary, uterus, and pituitary.

It localises to the cell membrane. It is found in the membrane raft. In terms of biological role, member of the repulsive guidance molecule (RGM) family that contributes to the patterning of the developing nervous system. Acts as a bone morphogenetic protein (BMP) coreceptor that potentiates BMP signaling. Promotes neuronal adhesion. May inhibit neurite outgrowth. The chain is Repulsive guidance molecule B from Mus musculus (Mouse).